We begin with the raw amino-acid sequence, 100 residues long: Aspartyl/glutamyl-tRNA(Asn/Gln) amidotransferase subunit C (100 aa).

The protein belongs to the GatC family. As to quaternary structure, heterotrimer of A, B and C subunits.

The catalysed reaction is L-glutamyl-tRNA(Gln) + L-glutamine + ATP + H2O = L-glutaminyl-tRNA(Gln) + L-glutamate + ADP + phosphate + H(+). The enzyme catalyses L-aspartyl-tRNA(Asn) + L-glutamine + ATP + H2O = L-asparaginyl-tRNA(Asn) + L-glutamate + ADP + phosphate + 2 H(+). Functionally, allows the formation of correctly charged Asn-tRNA(Asn) or Gln-tRNA(Gln) through the transamidation of misacylated Asp-tRNA(Asn) or Glu-tRNA(Gln) in organisms which lack either or both of asparaginyl-tRNA or glutaminyl-tRNA synthetases. The reaction takes place in the presence of glutamine and ATP through an activated phospho-Asp-tRNA(Asn) or phospho-Glu-tRNA(Gln). This is Aspartyl/glutamyl-tRNA(Asn/Gln) amidotransferase subunit C from Herminiimonas arsenicoxydans.